Here is a 191-residue protein sequence, read N- to C-terminus: Lipid A 1-phosphatase (191 aa).

Helical transmembrane passes span 22–42 (LLAL…PKVP), 60–80 (FIPT…VGLF), 117–137 (GNFN…AFLM), 145–162 (YLWL…RIYL), and 164–184 (MHTI…VGLF).

It belongs to the lipid A LpxE 1-phosphatase family.

The protein localises to the cell inner membrane. It participates in bacterial outer membrane biogenesis; LPS lipid A biosynthesis. Removes the 1-phosphate group from tetra- and probably hexaacylated lipid A species. Absence of the 1-phosphate group renders the bacteria partially resistant to host-derived cationic antimicrobial peptides (CAMP), allowing it to camouflage itself from the host innate immune response, and plays a role in the long-term colonization of the host's stomach. The sequence is that of Lipid A 1-phosphatase from Helicobacter pylori (strain J99 / ATCC 700824) (Campylobacter pylori J99).